Consider the following 520-residue polypeptide: Bile acid--coenzyme A ligase (520 aa).

This sequence belongs to the ATP-dependent AMP-binding enzyme family. As to quaternary structure, homodimer. Mg(2+) is required as a cofactor.

The catalysed reaction is cholate + ATP + CoA = choloyl-CoA + AMP + diphosphate. It catalyses the reaction deoxycholate + ATP + CoA = deoxycholoyl-CoA + AMP + diphosphate. The enzyme catalyses chenodeoxycholate + ATP + CoA = chenodeoxycholoyl-CoA + AMP + diphosphate. Its pathway is lipid metabolism; bile acid biosynthesis. Inhibited by diphosphate. Its function is as follows. Functions in the bile acid 7alpha-dehydroxylation pathway, which forms secondary bile acids via the 7alpha-dehydroxylation of primary bile acids, and is carried out by intestinal anaerobic bacteria. Catalyzes the initial step in this pathway, i.e. the ATP-dependent thioesterification of primary bile acids with coenzyme A. Is active with C-24 bile acids with free carboxyl groups such as cholate, deoxycholate and chenodeoxycholate. Produces AMP and pyrophosphate in addition to the bile acid-CoA thioester. The chain is Bile acid--coenzyme A ligase from Clostridium scindens (strain JCM 10418 / VPI 12708).